The following is a 2213-amino-acid chain: Sortilin-related receptor (2213 aa).

The signal sequence occupies residues 1-28 (MATRSSRRESRLPFLFTLVALLPPGALC). The propeptide at 29–81 (EVWTRTLHGGRAPLPQERGFRVVQGDPRELRLWERGDARGASRADEKPLRRRR) is removed in mature form. The Cell attachment site motif lies at 63-65 (RGD). The Lumenal portion of the chain corresponds to 82–2136 (SAALQPEPIK…MQAARSTDVA (2055 aa)). N-linked (GlcNAc...) asparagine glycosylation is present at N99. S114 bears the Phosphoserine mark. The BNR 1 repeat unit spans residues 136-147 (YVSYDYGKSFNK). N158 carries N-linked (GlcNAc...) asparagine glycosylation. Residues 232–243 (WKSDDFGQTWIM) form a BNR 2 repeat. N368 and N430 each carry an N-linked (GlcNAc...) asparagine glycan. BNR repeat units lie at residues 441–452 (VITFDKGGTWEF), 521–532 (YISSSAGARWRE), and 562–573 (KYSTNEGETWKA). N-linked (GlcNAc...) asparagine glycans are attached at residues N616, N674, N817, and N870. LDL-receptor class B repeat units lie at residues 799–842 (NCLY…EPLS), 843–886 (QLLY…VPQE), 887–929 (GIMF…SVDD), 930–971 (QWIY…FKNE), and 972–1012 (IYWD…FYKG). The 47-residue stretch at 1025 to 1071 (CSLLCLPRANNSKSCRCPDGVASSVLPSGDLMCDCPKGYELKNNTCV) folds into the EGF-like domain. N-linked (GlcNAc...) asparagine glycans are attached at residues N1034 and N1067. LDL-receptor class A domains follow at residues 1075 to 1113 (DTCL…NCPT), 1114 to 1154 (TICD…HCEM), 1155 to 1193 (HQCR…NCTA), 1196 to 1235 (HTCE…ANCE), 1237 to 1271 (KCNG…QHCE), 1272 to 1316 (PLCT…GCSR), 1322 to 1360 (KVCD…NCEN), 1365 to 1404 (PNCS…DCGD), and 1416 to 1454 (STCL…ACPS). 21 cysteine pairs are disulfide-bonded: C1077–C1089, C1084–C1102, C1096–C1111, C1116–C1130, C1124–C1143, C1137–C1152, C1157–C1169, C1164–C1182, C1176–C1191, C1198–C1210, C1205–C1223, C1217–C1234, C1238–C1248, C1243–C1261, C1255–C1270, C1274–C1288, C1282–C1301, C1295–C1314, C1324–C1336, C1331–C1349, and C1343–C1358. N1163 is a glycosylation site (N-linked (GlcNAc...) asparagine). Residue N1190 is glycosylated (N-linked (GlcNAc...) asparagine). The N-linked (GlcNAc...) asparagine glycan is linked to N1245. N1366 is a glycosylation site (N-linked (GlcNAc...) asparagine). 6 cysteine pairs are disulfide-bonded: C1367/C1380, C1375/C1393, C1387/C1402, C1418/C1430, C1425/C1443, and C1437/C1452. N-linked (GlcNAc...) asparagine glycosylation occurs at N1457. 2 consecutive LDL-receptor class A domains span residues 1468–1507 (GRCD…NCPT) and 1511–1550 (LTCM…ACSD). 6 disulfides stabilise this stretch: C1470-C1483, C1477-C1496, C1490-C1505, C1513-C1526, C1520-C1539, and C1533-C1548. Fibronectin type-III domains follow at residues 1556–1648 (KVQN…TPEG), 1652–1744 (APQN…TVKG), 1748–1843 (PPPN…VRPP), 1842–1926 (PPAP…VVKM), 1933–2028 (PPRH…APDA), and 2029–2117 (LKII…LYDE). 13 N-linked (GlcNAc...) asparagine glycosylation sites follow: N1569, N1607, N1705, N1732, N1808, N1853, N1893, N1985, N2009, N2053, N2068, N2075, and N2091. The helical transmembrane segment at 2137–2157 (AVVVPILFLILLSLGVGFAIL) threads the bilayer. The Cytoplasmic segment spans residues 2158–2213 (YTKHRRLQSSFTAFANSHYSSRLGSAIFSSGDDLGEDDEDAPMITGFSDDVPMVIA). The short motif at 2160 to 2163 (KHRR) is the Potential nuclear localization signal for the C-terminal fragment generated by PSEN1 element. The short motif at 2171–2176 (FANSHY) is the Endocytosis signal element. Residues 2189–2213 (DDLGEDDEDAPMITGFSDDVPMVIA) are required for efficient Golgi apparatus - endosome sorting. Residues 2200–2213 (MITGFSDDVPMVIA) form a required for interaction with GGA1 and GGA2 region. S2205 carries the post-translational modification Phosphoserine; by ROCK2. The DXXLL motif involved in the interaction with GGA1 motif lies at 2207–2211 (DVPMV).

It belongs to the VPS10-related sortilin family. SORL1 subfamily. In terms of assembly, after maturation cleavage, interacts (via N-terminus) with its own propeptide; this interaction prevents interaction with other ligands, including CRLF1, GDNF, GFRA1, IL6 and IL6R. Interacts (via N-terminal ectodomain) with APP, forming a 1:1 stoichiometric complex; this interaction retains APP in the trans-Golgi network and reduces processing into soluble APP-alpha and amyloid-beta peptides. Also interacts with APP C-terminal fragment C99 and with Abeta40. Interacts with beta-secretase BACE1/BACE; this interaction may affect BACE1-binding to APP and hence reduce BACE1-dependent APP cleavage. Interacts with LRPAP1/RAP. Interacts (via C-terminal cytosolic domain) with GGA1 and GGA2 (via N-terminal VHS domain). Interacts with PACS1. May interact (via the N-terminal ectodomain) with the morphogenetic neuropeptide, also called head activator or HA; this interaction is impaired in the presence of propeptide. Interacts with neurotensin/NTS. Interacts (via the N-terminal ectodomain) with PDGFB homodimer. Interacts (via N-terminal ectodomain) with the uPA receptor PLAUR. Interacts with uPA/PLAU and PAI1/SERPINE1, either individually or in complex with each other, leading to endocytosis. Also interacts with PAI1/SERPINE1 in complex with tPA/PLAT. Interacts (via C-terminus) with AP-1 and AP-2 complexes. Interacts with BMPR1A and BMPR1B. Interacts with lipoprotein lipase LPL; this interaction is optimal in slightly acidic conditions. Interacts (via N-terminal ectodomain) with GDNF (via propeptide) and GDNF receptor alpha-1/GFRA1, either individually or in complex with each other. The interaction with GDNF occurs mostly intracellularly. Also interacts with other GDNF receptor alpha family members, including GFRA2, GFRA3 and GFRA4. Interacts with the insulin receptor INSR; this interaction strongly increases the surface exposure of INSR. Interacts (via cytosolic C-terminus) with STK39/SPAK. Interacts (via N-terminal ectodomain) with the heterodimeric complex CRLF1-CLC; within this complex, the interaction is mediated predominantly by the CRLF1 moiety. Interacts with CNTFR, as well as with the tripartite signaling complex formed by CRLF1, CLC and CNTFR. Interacts (via N-terminal ectodomain) with IL6; this interaction leads to IL6 internalization and lysosomal degradation. Binding of SOLRL1 secreted N-terminal ectodomain to IL6 may increase IL6 trans signaling. Interacts with secreted IL6R; this interaction leads to IL6R internalization. Also interacts with transmembrane IL6R; this interaction does not affect subcellular location. Interacts with APOE. Interacts with apolipoprotein E-rich beta-VLDL. Interacts with APOA5; this interaction leads to APOA5 internalization and is abolished by heparin. Interaction with APOA5 results in enhanced binding to chylomicrons. Interacts with ROCK2. Interacts (via cytosolic C-terminus) with PPP3CB/calcineurin A beta. Interacts with NTRK2/TRKB; this interaction facilitates NTRK2 trafficking between synaptic plasma membranes, postsynaptic densities and cell soma, hence positively regulates BDNF signaling. Interacts (via cytosolic C-terminus) with HSPA12A in an ADP-dependent manner; this interaction affects SORL1 internalization and subcellular localization. Interacts (via N-terminal ectodomain) with ERBB2/HER2. In terms of processing, within the Golgi apparatus, the propeptide may be cleaved off by FURIN or a furin-like protease. After cleavage, the propeptide interacts with the mature protein N-terminus, preventing the association with other ligands. At the cell surface, partially subjected to proteolytic shedding that releases the ectodomain in the extracellular milieu. The shedding may be catalyzed by ADAM17/TACE. Following shedding, PSEN1/presenilin-1 cleaves the remaining transmembrane fragment and catalyzes the release of a C-terminal fragment in the cytosol and of a soluble N-terminal beta fragment in the extracellular milieu. The C-terminal cytosolic fragment localizes to the nucleus. Post-translationally, phosphorylation at Ser-2205 facilitates the interaction with GGA1. As to expression, expressed in brain, in particular the hippocampus, dentate gyrus, and cerebral cortex (at protein level). Also detected in liver, adrenal glands, pancreas and testis. Expressed in smooth muscle cells, predominantly during proliferation.

The protein localises to the golgi apparatus membrane. It localises to the golgi apparatus. It is found in the trans-Golgi network membrane. The protein resides in the endosome membrane. Its subcellular location is the early endosome membrane. The protein localises to the recycling endosome membrane. It localises to the endoplasmic reticulum membrane. It is found in the endosome. The protein resides in the multivesicular body membrane. Its subcellular location is the cell membrane. The protein localises to the cytoplasmic vesicle. It localises to the secretory vesicle membrane. It is found in the secreted. Sorting receptor that directs several proteins to their correct location within the cell. Along with AP-1 complex, involved Golgi apparatus - endosome sorting. Sorting receptor for APP, regulating its intracellular trafficking and processing into amyloidogenic-beta peptides. Retains APP in the trans-Golgi network, hence preventing its transit through late endosomes where amyloid beta peptides Abeta40 and Abeta42 are generated. May also sort newly produced amyloid-beta peptides to lysosomes for catabolism. Does not affect APP trafficking from the endoplasmic reticulum to Golgi compartments. Sorting receptor for the BDNF receptor NTRK2/TRKB that facilitates NTRK2 trafficking between synaptic plasma membranes, postsynaptic densities and cell soma, hence positively regulates BDNF signaling by controlling the intracellular location of its receptor. Sorting receptor for GDNF that promotes GDNF regulated, but not constitutive secretion. Sorting receptor for the GDNF-GFRA1 complex, directing it from the cell surface to endosomes. GDNF is then targeted to lysosomes and degraded, while its receptor GFRA1 recycles back to the cell membrane, resulting in a GDNF clearance pathway. The SORL1-GFRA1 complex further targets RET for endocytosis, but not for degradation, affecting GDNF-induced neurotrophic activities. Sorting receptor for ERBB2/HER2. Regulates ERBB2 subcellular distribution by promoting its recycling after internalization from endosomes back to the plasma membrane, hence stimulating phosphoinositide 3-kinase (PI3K)-dependent ERBB2 signaling. Sorting receptor for lipoprotein lipase LPL. Promotes LPL localization to endosomes and later to the lysosomes, leading to degradation of newly synthesized LPL. Potential sorting receptor for APOA5, inducing APOA5 internalization to early endosomes, then to late endosomes, wherefrom a portion is sent to lysosomes and degradation, another portion is sorted to the trans-Golgi network. Sorting receptor for the insulin receptor INSR. Promotes recycling of internalized INSR via the Golgi apparatus back to the cell surface, thereby preventing lysosomal INSR catabolism, increasing INSR cell surface expression and strengthening insulin signal reception in adipose tissue. Does not affect INSR internalization. Plays a role in renal ion homeostasis, controlling the phospho-regulation of SLC12A1/NKCC2 by STK39/SPAK kinase and PPP3CB/calcineurin A beta phosphatase, possibly through intracellular sorting of STK39 and PPP3CB. Stimulates, via the N-terminal ectodomain, the proliferation and migration of smooth muscle cells, possibly by increasing cell surface expression of the urokinase receptor uPAR/PLAUR. This may promote extracellular matrix proteolysis and hence facilitate cell migration. By acting on the migration of intimal smooth muscle cells, may accelerate intimal thickening following vascular injury. Promotes adhesion of monocytes. Stimulates proliferation and migration of monocytes/macrophages. Through its action on intimal smooth muscle cells and macrophages, may accelerate intimal thickening and macrophage foam cell formation in the process of atherosclerosis. Regulates hypoxia-enhanced adhesion of hematopoietic stem and progenitor cells to the bone marrow stromal cells via a PLAUR-mediated pathway. This function is mediated by the N-terminal ectodomain. Metabolic regulator, which functions to maintain the adequate balance between lipid storage and oxidation in response to changing environmental conditions, such as temperature and diet. The N-terminal ectodomain negatively regulates adipose tissue energy expenditure, acting through the inhibition the BMP/Smad pathway. May regulate signaling by the heterodimeric neurotrophic cytokine CLCF1-CRLF1 bound to the CNTFR receptor by promoting the endocytosis of the tripartite complex CLCF1-CRLF1-CNTFR and lysosomal degradation. May regulate IL6 signaling, decreasing cis signaling, possibly by interfering with IL6-binding to membrane-bound IL6R, while up-regulating trans signaling via soluble IL6R. The chain is Sortilin-related receptor (SORL1) from Oryctolagus cuniculus (Rabbit).